A 643-amino-acid polypeptide reads, in one-letter code: Threonine--tRNA ligase (643 aa).

The TGS domain occupies methionine 1–threonine 61. A catalytic region spans residues aspartate 240–proline 540. Zn(2+) is bound by residues cysteine 335, histidine 386, and histidine 517.

It belongs to the class-II aminoacyl-tRNA synthetase family. Homodimer. Requires Zn(2+) as cofactor.

It is found in the cytoplasm. It carries out the reaction tRNA(Thr) + L-threonine + ATP = L-threonyl-tRNA(Thr) + AMP + diphosphate + H(+). Functionally, catalyzes the attachment of threonine to tRNA(Thr) in a two-step reaction: L-threonine is first activated by ATP to form Thr-AMP and then transferred to the acceptor end of tRNA(Thr). Also edits incorrectly charged L-seryl-tRNA(Thr). In Clostridium perfringens (strain ATCC 13124 / DSM 756 / JCM 1290 / NCIMB 6125 / NCTC 8237 / Type A), this protein is Threonine--tRNA ligase.